Consider the following 199-residue polypeptide: Putative lectin L633 (199 aa).

The N-terminal stretch at methionine 1 to asparagine 25 is a signal peptide. Residues cysteine 35–aspartate 48 are compositionally biased toward polar residues. The interval cysteine 35 to asparagine 74 is disordered. The segment covering glutamine 49–proline 73 has biased composition (low complexity). The region spanning glutamate 84 to arginine 195 is the Bulb-type lectin domain. Asparagine 121 carries an N-linked (GlcNAc...) asparagine; by host glycan.

It localises to the secreted. The sequence is that of Putative lectin L633 from Acanthamoeba polyphaga (Amoeba).